The following is a 125-amino-acid chain: Small ribosomal subunit protein uS12c (125 aa).

This sequence belongs to the universal ribosomal protein uS12 family. In terms of assembly, part of the 30S ribosomal subunit.

The protein resides in the plastid. Its function is as follows. With S4 and S5 plays an important role in translational accuracy. Located at the interface of the 30S and 50S subunits. The sequence is that of Small ribosomal subunit protein uS12c (rps12) from Euglena longa (Euglenophycean alga).